The following is a 63-amino-acid chain: Large ribosomal subunit protein bL35 (63 aa).

A compositionally biased stretch (basic residues) spans 1–43 (MKMRTHSGAKKRLKVLSSGKVKKKSTRMRHLNSHMSSKTKRQL). The tract at residues 1–45 (MKMRTHSGAKKRLKVLSSGKVKKKSTRMRHLNSHMSSKTKRQLGK) is disordered.

The protein belongs to the bacterial ribosomal protein bL35 family.

In Bdellovibrio bacteriovorus (strain ATCC 15356 / DSM 50701 / NCIMB 9529 / HD100), this protein is Large ribosomal subunit protein bL35.